A 177-amino-acid polypeptide reads, in one-letter code: Inorganic pyrophosphatase (177 aa).

Residues Lys-31, Arg-45, and Tyr-57 each coordinate substrate. Residues Asp-67, Asp-72, and Asp-104 each coordinate Mg(2+). Tyr-141 contributes to the substrate binding site.

The protein belongs to the PPase family. In terms of assembly, homohexamer. Also forms homotrimers, but the trimeric form is 23% less active than the hexamer. In fact, likely forms a dimer of trimers. The cofactor is Mg(2+).

Its subcellular location is the cytoplasm. It carries out the reaction diphosphate + H2O = 2 phosphate + H(+). With respect to regulation, inhibited by sodium fluoride (NaF) in vitro, similarly to other class A type inorganic pyrophosphatases. Its function is as follows. Catalyzes the hydrolysis of inorganic pyrophosphate (PPi) forming two phosphate ions. The hydrolysis of PPi by inorganic pyrophosphatase releases a considerable amount of energy that can drive unfavorable biochemical transformations to completion. Is not active on nucleoside triphosphates (ATP, TTP, GTP, or CTP) or nucleoside diphosphate (ADP). The polypeptide is Inorganic pyrophosphatase (Haloferax volcanii (strain ATCC 29605 / DSM 3757 / JCM 8879 / NBRC 14742 / NCIMB 2012 / VKM B-1768 / DS2) (Halobacterium volcanii)).